The following is a 443-amino-acid chain: COP9 signalosome complex subunit 2 (443 aa).

The segment at 1–275 is mediates interaction with NIF3L1; it reads MSDMEDDFMC…DESGSPRRTT (275 aa). The region spanning 254–416 is the PCI domain; that stretch reads AHTDFFEAFK…QLLELDHQKR (163 aa).

It belongs to the CSN2 family. Component of the CSN complex, composed of COPS1/GPS1, COPS2, COPS3, COPS4, COPS5, COPS6, COPS7 (COPS7A or COPS7B), COPS8 and COPS9 isoform 1. In the complex, it probably interacts directly with COPS1, COPS4, COPS5, COPS6 and COPS7 (COPS7A or COPS7B). Specifically interacts with the ligand binding domain of the thyroid receptor (TR). Does not require the presence of thyroid hormone for its interaction. Interacts with CUL1 and CUL2. Interacts with IRF8/ICSBP1 and with nuclear receptors NR2F1 and NR0B1. Interacts with NIF3L1. In terms of processing, phosphorylated by CK2 and PKD kinases.

It is found in the cytoplasm. The protein resides in the nucleus. Functionally, essential component of the COP9 signalosome complex (CSN), a complex involved in various cellular and developmental processes. The CSN complex is an essential regulator of the ubiquitin (Ubl) conjugation pathway by mediating the deneddylation of the cullin subunits of SCF-type E3 ligase complexes, leading to decrease the Ubl ligase activity of SCF-type complexes such as SCF, CSA or DDB2. The complex is also involved in phosphorylation of p53/TP53, c-jun/JUN, IkappaBalpha/NFKBIA, ITPK1 and IRF8/ICSBP, possibly via its association with CK2 and PKD kinases. CSN-dependent phosphorylation of TP53 and JUN promotes and protects degradation by the Ubl system, respectively. Involved in early stage of neuronal differentiation via its interaction with NIF3L1. The polypeptide is COP9 signalosome complex subunit 2 (COPS2) (Homo sapiens (Human)).